Consider the following 408-residue polypeptide: Acetate kinase (408 aa).

Asparagine 7 provides a ligand contact to Mg(2+). Lysine 14 contacts ATP. Substrate is bound at residue arginine 91. The Proton donor/acceptor role is filled by aspartate 148. ATP-binding positions include 208–212 (HLGNG), 283–285 (DFR), and 331–335 (GIGEN). Glutamate 384 contacts Mg(2+).

The protein belongs to the acetokinase family. In terms of assembly, homodimer. It depends on Mg(2+) as a cofactor. Mn(2+) serves as cofactor.

Its subcellular location is the cytoplasm. It carries out the reaction acetate + ATP = acetyl phosphate + ADP. Its pathway is metabolic intermediate biosynthesis; acetyl-CoA biosynthesis; acetyl-CoA from acetate: step 1/2. Catalyzes the formation of acetyl phosphate from acetate and ATP. Can also catalyze the reverse reaction. The polypeptide is Acetate kinase (Methanosarcina barkeri (strain Fusaro / DSM 804)).